The sequence spans 83 residues: SPbeta prophage-derived uncharacterized protein YopE (83 aa).

A run of 2 helical transmembrane segments spans residues 5–25 (AYFL…FIFV) and 60–80 (VIAF…TKLF).

It is found in the cell membrane. This chain is SPbeta prophage-derived uncharacterized protein YopE (yopE), found in Bacillus subtilis (strain 168).